The chain runs to 365 residues: Peptide chain release factor 1 (365 aa).

Q236 bears the N5-methylglutamine mark.

The protein belongs to the prokaryotic/mitochondrial release factor family. Post-translationally, methylated by PrmC. Methylation increases the termination efficiency of RF1.

It is found in the cytoplasm. Functionally, peptide chain release factor 1 directs the termination of translation in response to the peptide chain termination codons UAG and UAA. The protein is Peptide chain release factor 1 of Latilactobacillus sakei subsp. sakei (strain 23K) (Lactobacillus sakei subsp. sakei).